The chain runs to 605 residues: ATP-dependent RNA helicase DBP3 (605 aa).

Positions 1-124 (MSAEELVASP…TPALSKKQQK (124 aa)) are disordered. Positions 54–66 (KDKKDKKEKKDKK) are enriched in basic residues. Positions 104-114 (PVSTATPTESE) are enriched in polar residues. Positions 175–201 (LSIRDLPINSKLQPFLNKFEKPTPIQA) match the Q motif motif. Residues 204–391 (WPALLSKKDV…STFLNNPLRI (188 aa)) form the Helicase ATP-binding domain. An ATP-binding site is contributed by 217 to 224 (AETGSGKT). Positions 336–339 (DEAD) match the DEAD box motif. Residues 424–575 (HLKAHLKVHP…EIPKEMDRFP (152 aa)) form the Helicase C-terminal domain.

It belongs to the DEAD box helicase family. DDX5/DBP2 subfamily.

Its subcellular location is the nucleus. It is found in the nucleolus. The catalysed reaction is ATP + H2O = ADP + phosphate + H(+). Its function is as follows. ATP-dependent RNA helicase required for 60S ribosomal subunit synthesis. Involved in efficient pre-rRNA processing, predominantly at site A3, which is necessary for the normal formation of 25S and 5.8S rRNAs. The polypeptide is ATP-dependent RNA helicase DBP3 (DBP3) (Cryptococcus neoformans var. neoformans serotype D (strain JEC21 / ATCC MYA-565) (Filobasidiella neoformans)).